The sequence spans 653 residues: Exocyst complex component EXO70C1 (653 aa).

3 stretches are compositionally biased toward basic and acidic residues: residues 1–34, 159–177, and 438–451; these read MEKS…DELH, SREE…DGSN, and NKPE…QQQR. Disordered regions lie at residues 1–50, 159–190, and 432–456; these read MEKS…HSLV, SREE…DSDR, and EANQ…DDEE.

The protein belongs to the EXO70 family. Interacts with ROH1A. Binds directly to B1L. Phosphorylated. Expressed in anthers, pollen and root trichoblast cells.

The protein localises to the cytoplasm. Its function is as follows. Required for global plant growth and for male transmission. Involved in the regulation of tip growth of pollen tube. This Arabidopsis thaliana (Mouse-ear cress) protein is Exocyst complex component EXO70C1.